The sequence spans 129 residues: MGKAKAPRQLKDNEAKAVARTLRVSPQKLNLVASMIRGKKVNAALADLTFSRKRIAGTVKKTLESAIANAENNHDLDVDALIVAEAYVGKSIVMKRFHVRGRGRASRIEKPFSHLTIVVREVAEKGEAA.

The protein belongs to the universal ribosomal protein uL22 family. In terms of assembly, part of the 50S ribosomal subunit.

This protein binds specifically to 23S rRNA; its binding is stimulated by other ribosomal proteins, e.g. L4, L17, and L20. It is important during the early stages of 50S assembly. It makes multiple contacts with different domains of the 23S rRNA in the assembled 50S subunit and ribosome. Its function is as follows. The globular domain of the protein is located near the polypeptide exit tunnel on the outside of the subunit, while an extended beta-hairpin is found that lines the wall of the exit tunnel in the center of the 70S ribosome. This chain is Large ribosomal subunit protein uL22, found in Brucella suis biovar 1 (strain 1330).